Consider the following 473-residue polypeptide: MKLTLPRYDQAPVLVVGDVMLDRYWHGGTSRISPEAPVPVVRVEQIEDRPGGAANVALNIAALGAPALLVGVTGEDEAADSLTDSLAAAGVEAHFQRIEDQPTIVKLRVMSRHQQLLRMDFEEPFNTDAAAMAREVEALLAGVKVLVLSDYGKGALQNHQVLIQAARKKGIPVLADPKGKDFSIYRGASLITPNLHEFETIVGGCADEAELVSKGAKLMRELELGALLVTRGEHGMTLLRPEHAPLHLPARAREVFDVTGAGDTVISTLAASIAAGEELPNAVALANLAAGIVVGKLGTAAISAPELRRAVQREEGSERGVLSLDQLLIAIEDARAHGEKIVFTNGCFDILHAGHVTYLEQARAQGDRLIVAINDDASVSRLKGPGRPINAVDRRMAVLAGLGAVDWVVSFAEDTPERLLKQVQPDVLVKGGDYGIDQVVGADIVQAYGGEVRVLGLVENSSTTAIVEKIRNK.

Residues 1–318 are ribokinase; that stretch reads MKLTLPRYDQ…RAVQREEGSE (318 aa). Residue 194–197 participates in ATP binding; sequence NLHE. Asp-263 is an active-site residue. Residues 343 to 473 form a cytidylyltransferase region; that stretch reads FTNGCFDILH…TAIVEKIRNK (131 aa).

This sequence in the N-terminal section; belongs to the carbohydrate kinase PfkB family. The protein in the C-terminal section; belongs to the cytidylyltransferase family. In terms of assembly, homodimer.

The catalysed reaction is D-glycero-beta-D-manno-heptose 7-phosphate + ATP = D-glycero-beta-D-manno-heptose 1,7-bisphosphate + ADP + H(+). It carries out the reaction D-glycero-beta-D-manno-heptose 1-phosphate + ATP + H(+) = ADP-D-glycero-beta-D-manno-heptose + diphosphate. It functions in the pathway nucleotide-sugar biosynthesis; ADP-L-glycero-beta-D-manno-heptose biosynthesis; ADP-L-glycero-beta-D-manno-heptose from D-glycero-beta-D-manno-heptose 7-phosphate: step 1/4. Its pathway is nucleotide-sugar biosynthesis; ADP-L-glycero-beta-D-manno-heptose biosynthesis; ADP-L-glycero-beta-D-manno-heptose from D-glycero-beta-D-manno-heptose 7-phosphate: step 3/4. In terms of biological role, catalyzes the phosphorylation of D-glycero-D-manno-heptose 7-phosphate at the C-1 position to selectively form D-glycero-beta-D-manno-heptose-1,7-bisphosphate. Catalyzes the ADP transfer from ATP to D-glycero-beta-D-manno-heptose 1-phosphate, yielding ADP-D-glycero-beta-D-manno-heptose. The polypeptide is Bifunctional protein HldE (Ectopseudomonas mendocina (strain ymp) (Pseudomonas mendocina)).